Reading from the N-terminus, the 188-residue chain is Holliday junction branch migration complex subunit RuvA (188 aa).

A domain I region spans residues 1 to 64; sequence MIAGISGRVL…QDGITLYGFS (64 aa). The segment at 65–143 is domain II; it reads NEMKKELFLS…SAGIKDMRIY (79 aa). Position 143 (Tyr143) is a region of interest, flexible linker. The tract at residues 143–186 is domain III; sequence YHESLEALVSLGYPEKQAREAVKQVYREGMKTSELIKEALKFLS.

It belongs to the RuvA family. Homotetramer. Forms an RuvA(8)-RuvB(12)-Holliday junction (HJ) complex. HJ DNA is sandwiched between 2 RuvA tetramers; dsDNA enters through RuvA and exits via RuvB. An RuvB hexamer assembles on each DNA strand where it exits the tetramer. Each RuvB hexamer is contacted by two RuvA subunits (via domain III) on 2 adjacent RuvB subunits; this complex drives branch migration. In the full resolvosome a probable DNA-RuvA(4)-RuvB(12)-RuvC(2) complex forms which resolves the HJ.

Its subcellular location is the cytoplasm. Its function is as follows. The RuvA-RuvB-RuvC complex processes Holliday junction (HJ) DNA during genetic recombination and DNA repair, while the RuvA-RuvB complex plays an important role in the rescue of blocked DNA replication forks via replication fork reversal (RFR). RuvA specifically binds to HJ cruciform DNA, conferring on it an open structure. The RuvB hexamer acts as an ATP-dependent pump, pulling dsDNA into and through the RuvAB complex. HJ branch migration allows RuvC to scan DNA until it finds its consensus sequence, where it cleaves and resolves the cruciform DNA. Promotes Holliday junction (HJ) branch migration in conjunction with RuvB. This chain is Holliday junction branch migration complex subunit RuvA, found in Thermotoga maritima (strain ATCC 43589 / DSM 3109 / JCM 10099 / NBRC 100826 / MSB8).